The sequence spans 175 residues: NADH-ubiquinone oxidoreductase chain 6 (175 aa).

The next 5 helical transmembrane spans lie at 1–21, 25–45, 47–67, 88–108, and 149–169; these read MMTY…VGFS, SPIY…GIVL, FGGS…MLVV, AVLG…CYIL, and YGTW…LVIM.

It belongs to the complex I subunit 6 family. In terms of assembly, core subunit of respiratory chain NADH dehydrogenase (Complex I) which is composed of 45 different subunits.

It localises to the mitochondrion inner membrane. It catalyses the reaction a ubiquinone + NADH + 5 H(+)(in) = a ubiquinol + NAD(+) + 4 H(+)(out). Its function is as follows. Core subunit of the mitochondrial membrane respiratory chain NADH dehydrogenase (Complex I) which catalyzes electron transfer from NADH through the respiratory chain, using ubiquinone as an electron acceptor. Essential for the catalytic activity and assembly of complex I. The chain is NADH-ubiquinone oxidoreductase chain 6 (MT-ND6) from Phoca vitulina (Harbor seal).